The sequence spans 301 residues: GLABROUS1 enhancer-binding protein-like 2 (301 aa).

Residues 1 to 62 are disordered; it reads MATPTELGFS…NTKMASPPSN (62 aa). The segment covering 44 to 54 has biased composition (basic residues); it reads KKKKKKTKHNT. The non-canonical leucine-zipper stretch occupies residues 268 to 289; sequence LSNEWKALCVEELKLNINKLRF.

Belongs to the GeBP family. As to quaternary structure, homo- and heterodimers. Interacts with GEBP, GPL1 and GPL3. Expressed in the apical meristem and young leaf primordia. Detected in the vascular tissues of cotyledons and leaves, in hydathodes and in the septun of siliques, but not in roots.

Its subcellular location is the nucleus. Probable transcription factor. May play redundant roles with GEBP and GPL1 in cytokinin responses by regulating the transcript levels of type-A ARR response genes. Involved in stress responses. Plays a repressive role in cell expansion by counteracting the positive role of CPR5 in this process, but does not regulate cell proliferation or endoreduplication. In Arabidopsis thaliana (Mouse-ear cress), this protein is GLABROUS1 enhancer-binding protein-like 2.